Consider the following 332-residue polypeptide: Anthranilate phosphoribosyltransferase (332 aa).

5-phospho-alpha-D-ribose 1-diphosphate-binding positions include G79, 82–83 (GD), T87, 89–92 (NIST), 107–115 (KHGNRSVSS), and S119. G79 serves as a coordination point for anthranilate. S91 provides a ligand contact to Mg(2+). N110 contacts anthranilate. Position 165 (R165) interacts with anthranilate. Residues D223 and E224 each contribute to the Mg(2+) site.

Belongs to the anthranilate phosphoribosyltransferase family. Homodimer. The cofactor is Mg(2+).

It carries out the reaction N-(5-phospho-beta-D-ribosyl)anthranilate + diphosphate = 5-phospho-alpha-D-ribose 1-diphosphate + anthranilate. It participates in amino-acid biosynthesis; L-tryptophan biosynthesis; L-tryptophan from chorismate: step 2/5. Catalyzes the transfer of the phosphoribosyl group of 5-phosphorylribose-1-pyrophosphate (PRPP) to anthranilate to yield N-(5'-phosphoribosyl)-anthranilate (PRA). This Vibrio parahaemolyticus serotype O3:K6 (strain RIMD 2210633) protein is Anthranilate phosphoribosyltransferase.